The sequence spans 363 residues: Flagellar P-ring protein (363 aa).

Positions 1–20 are cleaved as a signal peptide; that stretch reads MKYKLVLAVAVLVFSLPSQA.

The protein belongs to the FlgI family. As to quaternary structure, the basal body constitutes a major portion of the flagellar organelle and consists of four rings (L,P,S, and M) mounted on a central rod.

Its subcellular location is the periplasm. The protein localises to the bacterial flagellum basal body. In terms of biological role, assembles around the rod to form the L-ring and probably protects the motor/basal body from shearing forces during rotation. The sequence is that of Flagellar P-ring protein from Shewanella baltica (strain OS223).